Here is a 446-residue protein sequence, read N- to C-terminus: Sensor-type histidine kinase PrrB (446 aa).

2 helical membrane-spanning segments follow: residues 19–39 (VVAT…VVWV) and 151–171 (LLIC…LAAF). One can recognise an HAMP domain in the interval 172 to 222 (AVRPFKQLAEQTRSIDAGDEAPRVEVHGASEAIEIAEAMRGMLQRIWNEQN). The region spanning 237-446 (VSSHELRTPL…RLVLRLPGPS (210 aa)) is the Histidine kinase domain. His240 carries the phosphohistidine; by autocatalysis modification.

In terms of processing, autophosphorylated.

It localises to the cell membrane. It carries out the reaction ATP + protein L-histidine = ADP + protein N-phospho-L-histidine.. Member of the two-component regulatory system PrrB/PrrA that is involved specifically in early intracellular multiplication of Mycobacterium and is essential for its viability. Functions as a sensor protein kinase which is autophosphorylated at a histidine residue and transfers its phosphate group to the conserved aspartic acid residue in the regulatory domain of PrrA. In turn, PrrA binds to the upstream promoter regions of target genes including itself to positively regulate their expression. The protein is Sensor-type histidine kinase PrrB (prrB) of Mycobacterium bovis (strain ATCC BAA-935 / AF2122/97).